A 180-amino-acid chain; its full sequence is ATP-dependent protease subunit HslV (180 aa).

The active site involves Thr2. Residues Gly157, Cys160, and Ser163 each coordinate Na(+).

It belongs to the peptidase T1B family. HslV subfamily. In terms of assembly, a double ring-shaped homohexamer of HslV is capped on each side by a ring-shaped HslU homohexamer. The assembly of the HslU/HslV complex is dependent on binding of ATP.

It is found in the cytoplasm. It catalyses the reaction ATP-dependent cleavage of peptide bonds with broad specificity.. Its activity is regulated as follows. Allosterically activated by HslU binding. In terms of biological role, protease subunit of a proteasome-like degradation complex believed to be a general protein degrading machinery. The sequence is that of ATP-dependent protease subunit HslV from Wigglesworthia glossinidia brevipalpis.